The chain runs to 65 residues: Large ribosomal subunit protein bL35 (65 aa).

The protein belongs to the bacterial ribosomal protein bL35 family.

The polypeptide is Large ribosomal subunit protein bL35 (Baumannia cicadellinicola subsp. Homalodisca coagulata).